The sequence spans 224 residues: LexA repressor (224 aa).

Residues 29–49 constitute a DNA-binding region (H-T-H motif); it reads RAEIARALGFRSPNAAEDHLK. Residues S142 and K179 each act as for autocatalytic cleavage activity in the active site.

Belongs to the peptidase S24 family. Homodimer.

It carries out the reaction Hydrolysis of Ala-|-Gly bond in repressor LexA.. Functionally, represses a number of genes involved in the response to DNA damage (SOS response), including recA and lexA. In the presence of single-stranded DNA, RecA interacts with LexA causing an autocatalytic cleavage which disrupts the DNA-binding part of LexA, leading to derepression of the SOS regulon and eventually DNA repair. This is LexA repressor from Bordetella petrii (strain ATCC BAA-461 / DSM 12804 / CCUG 43448).